The following is a 465-amino-acid chain: Deoxyguanosinetriphosphate triphosphohydrolase-like protein (465 aa).

A disordered region spans residues 1–22 (MKWDKLLNDKRRRESGVTRSKN). The HD domain maps to 63 to 252 (RLTHSMEVST…LEVADDIAYL (190 aa)).

Belongs to the dGTPase family. Type 3 subfamily.

This chain is Deoxyguanosinetriphosphate triphosphohydrolase-like protein, found in Listeria innocua serovar 6a (strain ATCC BAA-680 / CLIP 11262).